The primary structure comprises 645 residues: MDGTVTPSPTTTAMPPVSALDAGTPTLPPEAPLAMPEQNLREGSLQVRHQRTSPPGIGVRRFYLIGGTFATTAIAVWVMLSVLWPDGISVLEGCLLGLFVLLFAWIAMSFASAVAGFVTVVARAGRKLGIDPEQPLPTLRSRTALLMPTYNEDPRRLLAGLQAIYESVAETGQLEHFDFFVLSDTTREHIGRAEELVYNELCDRVDGHGRIFYRRRADNAARKAGNVADWVRRFGGSYPQMLILDADSVMTGDTIVRLVAGMENNPDVGLIQTLPAVVNGQTLFARMQQFGGRVYGPIIAFGVAWWHGAESNYWGHNAIIRTQAFADHAGLPSLRGRKPFGGHVLSHDFVEAALMRRGGWAMHMVPYLQGSYEEGPPTLTDLLIRDRRWCQGNLQHAKVVSAKGLHWISRMHMLIGIGHYFTAPMWGLLMLIGIGIPLAGGGIDLAGDLPFSPARYWHGSSQGNAIWIFICTMFVLLAPKLLGYIALLLNPRELRACGGAFRAAVSILLETVLAALMAPVVMYLQSRGVFEVLAGKDSGWDAQVRDDGKLSWPALFRSYGGLTVFGLFMGAVAYAVSPALAAWMGPVIVGMALSIPVVALTSLRRTGMALRRAGIFCIPEELDPPKVLVRASELRRAAALEPSLI.

The span at 1–13 shows a compositional bias: polar residues; it reads MDGTVTPSPTTTA. Residues 1 to 32 are disordered; it reads MDGTVTPSPTTTAMPPVSALDAGTPTLPPEAP. Transmembrane regions (helical) follow at residues 64 to 84, 98 to 118, 423 to 443, 465 to 485, 504 to 524, 559 to 579, and 580 to 600; these read LIGGTFATTAIAVWVMLSVLW, LFVLLFAWIAMSFASAVAGFV, APMWGLLMLIGIGIPLAGGGI, AIWIFICTMFVLLAPKLLGYI, AVSILLETVLAALMAPVVMYL, YGGLTVFGLFMGAVAYAVSPA, and LAAWMGPVIVGMALSIPVVAL.

The protein belongs to the glycosyltransferase 2 family. OpgH subfamily.

Its subcellular location is the cell inner membrane. Its pathway is glycan metabolism; osmoregulated periplasmic glucan (OPG) biosynthesis. Its function is as follows. Involved in the biosynthesis of osmoregulated periplasmic glucans (OPGs). This chain is Glucans biosynthesis glucosyltransferase H, found in Xanthomonas euvesicatoria pv. vesicatoria (strain 85-10) (Xanthomonas campestris pv. vesicatoria).